The sequence spans 156 residues: uncharacterized protein (156 aa).

The region spanning 10–156 is the N-acetyltransferase domain; it reads VAARTFPLAC…NDYVMVRELV (147 aa).

The protein belongs to the acetyltransferase family.

This is an uncharacterized protein from Mycobacterium bovis (strain ATCC BAA-935 / AF2122/97).